The following is a 95-amino-acid chain: Defensin-like protein 232 (95 aa).

The N-terminal stretch at Met-1–Ala-26 is a signal peptide. Cystine bridges form between Cys-33–Cys-94, Cys-43–Cys-68, Cys-51–Cys-84, and Cys-66–Cys-86.

It belongs to the DEFL family. Flower buds.

The protein resides in the secreted. In Arabidopsis thaliana (Mouse-ear cress), this protein is Defensin-like protein 232 (SCRL23).